A 349-amino-acid chain; its full sequence is Glycerol-3-phosphate dehydrogenase [NAD(P)+] (349 aa).

Residues Ser31, Phe32, Arg52, Lys53, and Lys126 each contribute to the NADPH site. Residues Lys126, Gly154, and Ser156 each contribute to the sn-glycerol 3-phosphate site. Ala158 lines the NADPH pocket. 5 residues coordinate sn-glycerol 3-phosphate: Lys209, Asp262, Ser272, Arg273, and Asn274. Lys209 functions as the Proton acceptor in the catalytic mechanism. Position 273 (Arg273) interacts with NADPH. Positions 297 and 299 each coordinate NADPH.

The protein belongs to the NAD-dependent glycerol-3-phosphate dehydrogenase family.

The protein localises to the cytoplasm. It catalyses the reaction sn-glycerol 3-phosphate + NAD(+) = dihydroxyacetone phosphate + NADH + H(+). The catalysed reaction is sn-glycerol 3-phosphate + NADP(+) = dihydroxyacetone phosphate + NADPH + H(+). The protein operates within membrane lipid metabolism; glycerophospholipid metabolism. Functionally, catalyzes the reduction of the glycolytic intermediate dihydroxyacetone phosphate (DHAP) to sn-glycerol 3-phosphate (G3P), the key precursor for phospholipid synthesis. In Clostridium tetani (strain Massachusetts / E88), this protein is Glycerol-3-phosphate dehydrogenase [NAD(P)+].